The following is a 102-amino-acid chain: NADH-quinone oxidoreductase subunit K (102 aa).

3 helical membrane passes run 5 to 25 (LGHY…GIFL), 30 to 50 (IIVI…NLVA), and 62 to 82 (VFAL…LAVL).

The protein belongs to the complex I subunit 4L family. As to quaternary structure, NDH-1 is composed of 14 different subunits. Subunits NuoA, H, J, K, L, M, N constitute the membrane sector of the complex.

The protein localises to the cell inner membrane. The enzyme catalyses a quinone + NADH + 5 H(+)(in) = a quinol + NAD(+) + 4 H(+)(out). Its function is as follows. NDH-1 shuttles electrons from NADH, via FMN and iron-sulfur (Fe-S) centers, to quinones in the respiratory chain. The immediate electron acceptor for the enzyme in this species is believed to be ubiquinone. Couples the redox reaction to proton translocation (for every two electrons transferred, four hydrogen ions are translocated across the cytoplasmic membrane), and thus conserves the redox energy in a proton gradient. The protein is NADH-quinone oxidoreductase subunit K of Bradyrhizobium sp. (strain BTAi1 / ATCC BAA-1182).